The following is a 352-amino-acid chain: Ion-translocating oxidoreductase complex subunit D (352 aa).

The next 5 helical transmembrane spans lie at 20–40 (IMLL…WFFG), 42–62 (GTLV…ALVL), 78–109 (ALLT…VIIA), 123–143 (PAMI…TSWL), and 148–168 (IAVN…GHTA). Threonine 187 is modified (FMN phosphoryl threonine). 4 helical membrane passes run 214–234 (ILAG…GVWL), 242–262 (WHIP…GWLF), 267–287 (LAAP…FFIL), and 301–318 (LMFG…RSFG).

This sequence belongs to the NqrB/RnfD family. In terms of assembly, the complex is composed of six subunits: RsxA, RsxB, RsxC, RsxD, RsxE and RsxG. FMN is required as a cofactor.

The protein localises to the cell inner membrane. Its function is as follows. Part of a membrane-bound complex that couples electron transfer with translocation of ions across the membrane. Required to maintain the reduced state of SoxR. In Shigella flexneri serotype 5b (strain 8401), this protein is Ion-translocating oxidoreductase complex subunit D.